Here is a 276-residue protein sequence, read N- to C-terminus: Undecaprenyl-diphosphatase (276 aa).

Transmembrane regions (helical) follow at residues 84–104 (YRLG…GLFF), 115–135 (LWVV…AEYV), 188–208 (FGFL…LPDA), 222–242 (QLLV…AWLL), and 250–270 (MYWF…LLAT).

Belongs to the UppP family.

It is found in the cell membrane. The catalysed reaction is di-trans,octa-cis-undecaprenyl diphosphate + H2O = di-trans,octa-cis-undecaprenyl phosphate + phosphate + H(+). Functionally, catalyzes the dephosphorylation of undecaprenyl diphosphate (UPP). Confers resistance to bacitracin. The sequence is that of Undecaprenyl-diphosphatase from Mycobacterium bovis (strain ATCC BAA-935 / AF2122/97).